The sequence spans 142 residues: Large ribosomal subunit protein uL13 (142 aa).

It belongs to the universal ribosomal protein uL13 family. As to quaternary structure, part of the 50S ribosomal subunit.

Functionally, this protein is one of the early assembly proteins of the 50S ribosomal subunit, although it is not seen to bind rRNA by itself. It is important during the early stages of 50S assembly. The polypeptide is Large ribosomal subunit protein uL13 (Pyrococcus furiosus (strain ATCC 43587 / DSM 3638 / JCM 8422 / Vc1)).